A 205-amino-acid polypeptide reads, in one-letter code: Ribosomal RNA large subunit methyltransferase E (205 aa).

S-adenosyl-L-methionine is bound by residues G60, W62, D80, D96, and D121. K161 functions as the Proton acceptor in the catalytic mechanism.

The protein belongs to the class I-like SAM-binding methyltransferase superfamily. RNA methyltransferase RlmE family.

Its subcellular location is the cytoplasm. The enzyme catalyses uridine(2552) in 23S rRNA + S-adenosyl-L-methionine = 2'-O-methyluridine(2552) in 23S rRNA + S-adenosyl-L-homocysteine + H(+). Its function is as follows. Specifically methylates the uridine in position 2552 of 23S rRNA at the 2'-O position of the ribose in the fully assembled 50S ribosomal subunit. The sequence is that of Ribosomal RNA large subunit methyltransferase E from Chromobacterium violaceum (strain ATCC 12472 / DSM 30191 / JCM 1249 / CCUG 213 / NBRC 12614 / NCIMB 9131 / NCTC 9757 / MK).